The following is a 574-amino-acid chain: 3-hydroxy-3-methylglutaryl-coenzyme A reductase 3 (574 aa).

A disordered region spans residues 1-30; the sequence is MDVRRRPVKPLYPSEHISSGEPLKPHNQDS. Residues 41 to 61 form a helical membrane-spanning segment; that stretch reads PLYLTNGLFFTMFFSVMYFLL. N-linked (GlcNAc...) asparagine glycosylation occurs at Asn-78. The chain crosses the membrane as a helical span at residues 83 to 103; sequence VAMVSLIASVIYLLGFFGIGF. Residues 104–161 form a linker region; it reads VQSFVSKGNNDSWDVEDESPEQFIDRTVTPPPVRRNIPMKSVPVAEKTAQIITPFSSE. Residue Asn-113 is glycosylated (N-linked (GlcNAc...) asparagine). The tract at residues 162-574 is catalytic; the sequence is DDEVVIKSVV…YNRSCKDVTK (413 aa). Catalysis depends on Glu-256, which acts as the Charge relay system. A glycan (N-linked (GlcNAc...) asparagine) is linked at Asn-320. The active-site Charge relay system is Lys-388. Asn-433 carries N-linked (GlcNAc...) asparagine glycosylation. Asp-464 functions as the Charge relay system in the catalytic mechanism. His-562 serves as the catalytic Proton donor. A glycan (N-linked (GlcNAc...) asparagine) is linked at Asn-566.

This sequence belongs to the HMG-CoA reductase family. In terms of tissue distribution, expressed in mature petals and anthers.

The protein resides in the endoplasmic reticulum membrane. The catalysed reaction is (R)-mevalonate + 2 NADP(+) + CoA = (3S)-3-hydroxy-3-methylglutaryl-CoA + 2 NADPH + 2 H(+). It functions in the pathway metabolic intermediate biosynthesis; (R)-mevalonate biosynthesis; (R)-mevalonate from acetyl-CoA: step 3/3. Functionally, catalyzes the synthesis of mevalonate. The specific precursor of all isoprenoid compounds present in plants. This is 3-hydroxy-3-methylglutaryl-coenzyme A reductase 3 (HMG3) from Solanum tuberosum (Potato).